Consider the following 335-residue polypeptide: MFLTILAGLIAFAVTALAMPHFIRLYQLKKIGGQQMHEDVKQHLAKAGTPTMGGTVFLLVATSLSFVFALVYFRDGQSLGLISGILLIVLIYGIIGFLDDFLKIFKQVNEGLTAKQKFTLQIVGGLVFYVIHVMPSGIDAINVFGYHWHLGFLYLCFVLFWVVGFSNAVNLTDGIDGLASVSVVISLLAYGVIAYAQGQFDVLLLIGIMVGALLAFFLFNHKPAKIFMGDVGSLALGAMLAAISIALRQEWTLLVIGIVYVLETSSVMLQVTYFKYTKKKYGEGRRIFRMTPFHHHLELGGLSGKAAKWSEWKVDAFLWALGLVASLIVLAILYL.

10 helical membrane-spanning segments follow: residues 3–23, 53–73, 78–98, 118–138, 143–163, 174–194, 200–220, 226–246, 251–271, and 314–334; these read LTIL…PHFI, GGTV…LVYF, SLGL…IGFL, FTLQ…PSGI, VFGY…FWVV, GIDG…GVIA, FDVL…FLFN, IFMG…ISIA, WTLL…MLQV, and VDAF…AILY.

It belongs to the glycosyltransferase 4 family. MraY subfamily. The cofactor is Mg(2+).

The protein resides in the cell membrane. The enzyme catalyses UDP-N-acetyl-alpha-D-muramoyl-L-alanyl-gamma-D-glutamyl-L-lysyl-D-alanyl-D-alanine + di-trans,octa-cis-undecaprenyl phosphate = Mur2Ac(oyl-L-Ala-gamma-D-Glu-L-Lys-D-Ala-D-Ala)-di-trans,octa-cis-undecaprenyl diphosphate + UMP. The protein operates within cell wall biogenesis; peptidoglycan biosynthesis. Its function is as follows. Catalyzes the initial step of the lipid cycle reactions in the biosynthesis of the cell wall peptidoglycan: transfers peptidoglycan precursor phospho-MurNAc-pentapeptide from UDP-MurNAc-pentapeptide onto the lipid carrier undecaprenyl phosphate, yielding undecaprenyl-pyrophosphoryl-MurNAc-pentapeptide, known as lipid I. In Streptococcus equi subsp. zooepidemicus (strain MGCS10565), this protein is Phospho-N-acetylmuramoyl-pentapeptide-transferase.